We begin with the raw amino-acid sequence, 474 residues long: Selection and upkeep of intraepithelial T-cells protein 4 (474 aa).

The N-terminal stretch at 1–25 is a signal peptide; sequence MGATEVLTSYCVVLCLLQMVALSSG. The Extracellular portion of the chain corresponds to 26–241; it reads HFTVIGSQRP…VLSGELFSWK (216 aa). One can recognise an Ig-like V-type domain in the interval 27-140; it reads FTVIGSQRPI…EEHITEVKVT (114 aa). 2 cysteine pairs are disulfide-bonded: C48–C122 and C162–C216. N-linked (GlcNAc...) asparagine glycosylation is found at N111 and N199. Residues 141–234 form the Ig-like C1-type domain; the sequence is ATSSDIQILM…QEQSINIVLS (94 aa). A helical transmembrane segment spans residues 242–262; it reads IVWIMILSTISFVMIDFCMTY. The Cytoplasmic portion of the chain corresponds to 263–298; sequence CVQQQLIHEESLSTVDNDQCESDQSEGTCYKRNYPW. The chain crosses the membrane as a helical span at residues 299-319; the sequence is IIIAVVPIISVFAIIGVMLFL. Topologically, residues 320–341 are extracellular; it reads HLEQRVTILEQHFELDTLWLED. The helical transmembrane segment at 342-362 threads the bilayer; that stretch reads ISVILCVVIVSNINLIPLIYF. Residues 363 to 381 lie on the Cytoplasmic side of the membrane; that stretch reads RLHEHVPRFKDRSPILNKA. A helical transmembrane segment spans residues 382–402; that stretch reads VVFLHFIYFSIVCGTILLVHL. Over 403–420 the chain is Extracellular; the sequence is QLRNKVSISDSLFSLYNS. Residues 421–441 form a helical membrane-spanning segment; sequence WLTDISMILGFLLSIFIVTTI. The Cytoplasmic segment spans residues 442-474; the sequence is AKSSLFNKKWCIGLCIHMKEAEATGGPCEGEEL.

It belongs to the SKINT family. Expressed in skin, thymus and, to a lower extent, bladder and testis.

The protein resides in the membrane. Its function is as follows. May act by engaging a cell surface molecule on immature T-cells in the embryonic thymus. This Mus musculus (Mouse) protein is Selection and upkeep of intraepithelial T-cells protein 4 (Skint4).